Reading from the N-terminus, the 280-residue chain is Shikimate dehydrogenase (NADP(+)) (280 aa).

Shikimate is bound by residues Ser-15–Ser-17 and Thr-62. Catalysis depends on Lys-66, which acts as the Proton acceptor. Residues Asn-88 and Asp-104 each contribute to the shikimate site. Residues Gly-128 to Ala-132, Asn-151 to Arg-156, and Ile-222 contribute to the NADP(+) site. Tyr-224 is a binding site for shikimate. An NADP(+)-binding site is contributed by Gly-245.

This sequence belongs to the shikimate dehydrogenase family. As to quaternary structure, homodimer.

The enzyme catalyses shikimate + NADP(+) = 3-dehydroshikimate + NADPH + H(+). It participates in metabolic intermediate biosynthesis; chorismate biosynthesis; chorismate from D-erythrose 4-phosphate and phosphoenolpyruvate: step 4/7. Functionally, involved in the biosynthesis of the chorismate, which leads to the biosynthesis of aromatic amino acids. Catalyzes the reversible NADPH linked reduction of 3-dehydroshikimate (DHSA) to yield shikimate (SA). The chain is Shikimate dehydrogenase (NADP(+)) from Methanosarcina acetivorans (strain ATCC 35395 / DSM 2834 / JCM 12185 / C2A).